Reading from the N-terminus, the 827-residue chain is Translation initiation factor IF-2 (827 aa).

The disordered stretch occupies residues 49 to 205 (ALNREKEEKE…GAPDKKREWE (157 aa)). Basic and acidic residues-rich tracts occupy residues 50–73 (LNRE…KAEA), 96–106 (RPREQRSDRPQ), 116–129 (PEPR…RPGE), 137–150 (RPRD…KERG), 157–168 (FGEKKERPPFPR), and 182–205 (EAPK…REWE). The tr-type G domain occupies 326–495 (PRPPIVTVMG…LLVADLKELK (170 aa)). The tract at residues 335–342 (GHVDHGKT) is G1. 335-342 (GHVDHGKT) contributes to the GTP binding site. Residues 360–364 (GITQH) form a G2 region. Residues 381-384 (DTPG) are G3. GTP contacts are provided by residues 381-385 (DTPGH) and 435-438 (NKID). The segment at 435 to 438 (NKID) is G4. Positions 471–473 (SAL) are G5.

This sequence belongs to the TRAFAC class translation factor GTPase superfamily. Classic translation factor GTPase family. IF-2 subfamily.

It is found in the cytoplasm. Functionally, one of the essential components for the initiation of protein synthesis. Protects formylmethionyl-tRNA from spontaneous hydrolysis and promotes its binding to the 30S ribosomal subunits. Also involved in the hydrolysis of GTP during the formation of the 70S ribosomal complex. In Carboxydothermus hydrogenoformans (strain ATCC BAA-161 / DSM 6008 / Z-2901), this protein is Translation initiation factor IF-2.